A 270-amino-acid polypeptide reads, in one-letter code: Cyclic pyranopterin monophosphate synthase, mitochondrial (270 aa).

Residues 1-32 (MISTLRRAVFLRRFPAVVSPIKRAFSSRIDDE) constitute a mitochondrion transit peptide. Substrate-binding positions include 187 to 189 (LCH) and 225 to 226 (ME). The active site involves D240.

The protein belongs to the MoaC family. Homohexamer. In terms of tissue distribution, abundantly expressed in the roots.

The protein localises to the mitochondrion matrix. It catalyses the reaction (8S)-3',8-cyclo-7,8-dihydroguanosine 5'-triphosphate = cyclic pyranopterin phosphate + diphosphate. It participates in cofactor biosynthesis; molybdopterin biosynthesis. Its function is as follows. Catalyzes the conversion of (8S)-3',8-cyclo-7,8-dihydroguanosine 5'-triphosphate to cyclic pyranopterin monophosphate (cPMP). The chain is Cyclic pyranopterin monophosphate synthase, mitochondrial (CNX3) from Arabidopsis thaliana (Mouse-ear cress).